The sequence spans 295 residues: Cbb3-type cytochrome c oxidase subunit CcoP (295 aa).

Residues 1 to 31 (MAQKEKDALSGVETTGHEWDGLRELNNPLPK) are Cytoplasmic-facing. The chain crosses the membrane as a helical span at residues 32–52 (WWLYIFYVCIAWSLVYYVLYP). The Periplasmic portion of the chain corresponds to 53–295 (AWPLGKSYTK…VYVHNLGGGK (243 aa)). Cytochrome c domains are found at residues 108–200 (FAMA…LSLN) and 207–292 (AAAE…HNLG). Positions 121, 124, 125, 175, 220, 223, 224, and 269 each coordinate heme c.

The protein belongs to the CcoP / FixP family. As to quaternary structure, component of the cbb3-type cytochrome c oxidase at least composed of CcoN, CcoO, CcoQ and CcoP. Heme c serves as cofactor.

The protein resides in the cell inner membrane. The protein operates within energy metabolism; oxidative phosphorylation. Functionally, C-type cytochrome. Part of the cbb3-type cytochrome c oxidase complex. CcoP subunit is required for transferring electrons from donor cytochrome c via its heme groups to CcoO subunit. From there, electrons are shuttled to the catalytic binuclear center of CcoN subunit where oxygen reduction takes place. The complex also functions as a proton pump. The chain is Cbb3-type cytochrome c oxidase subunit CcoP from Azospirillum brasilense.